We begin with the raw amino-acid sequence, 641 residues long: MGPPLKLFKNQKYQELKQECMKDGRLFCDPTFLPENDSLFFNRLLPGKVVWKRPQDISDDPHLIVGNISNHQLIQGRLGNKAMISAFSCLAVQESHWTKAIPNHKDQEWDPRKPEKYAGIFHFRFWHFGEWTEVVIDDLLPTINGDLVFSFSTSMNEFWNALLEKAYAKLLGCYEALDGLTITDIIMDFTGTLAEIIDMQKGRYTDLVEEKYKLFGELYKTFTKGGLICCSIESPSQEEQEVETDWGLLKGYTYTMTDIRKLRLGERLVEVFSTEKLYMVRLRNPLGRQEWSGPWSEISEEWQQLTVTDRKNLGLVMSDDGEFWMSLEDFCHNFHKLNVCRNVNNPVFGRKELESVVGCWTVDDDPLMNRSGGCYNNRDTFLQNPQYIFTVPEDGHKVIMSLQQKDLRTYRRMGRPDNYIIGFELFKVEMNRRFRLHHLYIQERAGTSTYIDTRTVFLSKYLKKGSYVLVPTMFQHGRTSEFLLRIFSEVPVQLRELTLDMPKMSCWNLARGYPKVVTQITVHSAEGLEKKYANETVNPYLIIKCGKEEVRSPVQKNTVHAIFDTQAIFYRRTTDIPIIIQVWNSRKFCDQFLGQVTLDADPSDCRDLKSLYLRKKGGPTAKVKQGHISFKVISSDDLTEL.

A Calpain catalytic domain is found at 26-343; it reads LFCDPTFLPE…FHKLNVCRNV (318 aa). The domain III stretch occupies residues 344–495; it reads NNPVFGRKEL…IFSEVPVQLR (152 aa). Residues 498–621 enclose the C2 domain; sequence TLDMPKMSCW…YLRKKGGPTA (124 aa).

The protein belongs to the peptidase C2 family. As to quaternary structure, interacts (via domain III) with microtubules. Interacts (via domain II) with ARHGEF2 (via the N-terminal zinc finger).

The protein resides in the cytoplasm. Its subcellular location is the perinuclear region. The protein localises to the cytoskeleton. It is found in the spindle. In terms of biological role, microtubule-stabilizing protein that may be involved in the regulation of microtubule dynamics and cytoskeletal organization. May act as a regulator of RAC1 activity through interaction with ARHGEF2 to control lamellipodial formation and cell mobility. Does not seem to have protease activity as it has lost the active site residues. The sequence is that of Calpain-6 (Capn6) from Mus musculus (Mouse).